We begin with the raw amino-acid sequence, 338 residues long: Holliday junction branch migration complex subunit RuvB (338 aa).

The interval 1–181 (MTRTITPSIT…FGVISRLEFY (181 aa)) is large ATPase domain (RuvB-L). Residues L20, R21, G62, K65, T66, T67, 128–130 (EDF), R171, Y181, and R218 contribute to the ATP site. Residue T66 coordinates Mg(2+). The segment at 182-252 (TDEELAFIIT…VVQDALALLE (71 aa)) is small ATPAse domain (RuvB-S). The tract at residues 255–338 (EMGFDQMDRM…VPEPPQGKLF (84 aa)) is head domain (RuvB-H). 2 residues coordinate DNA: R310 and R315.

It belongs to the RuvB family. In terms of assembly, homohexamer. Forms an RuvA(8)-RuvB(12)-Holliday junction (HJ) complex. HJ DNA is sandwiched between 2 RuvA tetramers; dsDNA enters through RuvA and exits via RuvB. An RuvB hexamer assembles on each DNA strand where it exits the tetramer. Each RuvB hexamer is contacted by two RuvA subunits (via domain III) on 2 adjacent RuvB subunits; this complex drives branch migration. In the full resolvosome a probable DNA-RuvA(4)-RuvB(12)-RuvC(2) complex forms which resolves the HJ.

Its subcellular location is the cytoplasm. It carries out the reaction ATP + H2O = ADP + phosphate + H(+). Its function is as follows. The RuvA-RuvB-RuvC complex processes Holliday junction (HJ) DNA during genetic recombination and DNA repair, while the RuvA-RuvB complex plays an important role in the rescue of blocked DNA replication forks via replication fork reversal (RFR). RuvA specifically binds to HJ cruciform DNA, conferring on it an open structure. The RuvB hexamer acts as an ATP-dependent pump, pulling dsDNA into and through the RuvAB complex. RuvB forms 2 homohexamers on either side of HJ DNA bound by 1 or 2 RuvA tetramers; 4 subunits per hexamer contact DNA at a time. Coordinated motions by a converter formed by DNA-disengaged RuvB subunits stimulates ATP hydrolysis and nucleotide exchange. Immobilization of the converter enables RuvB to convert the ATP-contained energy into a lever motion, pulling 2 nucleotides of DNA out of the RuvA tetramer per ATP hydrolyzed, thus driving DNA branch migration. The RuvB motors rotate together with the DNA substrate, which together with the progressing nucleotide cycle form the mechanistic basis for DNA recombination by continuous HJ branch migration. Branch migration allows RuvC to scan DNA until it finds its consensus sequence, where it cleaves and resolves cruciform DNA. This Geotalea uraniireducens (strain Rf4) (Geobacter uraniireducens) protein is Holliday junction branch migration complex subunit RuvB.